Reading from the N-terminus, the 360-residue chain is Glycoprotein-N-acetylgalactosamine 3-beta-galactosyltransferase 1 (360 aa).

Over 1-7 (MSIICAK) the chain is Cytoplasmic. The chain crosses the membrane as a helical; Signal-anchor for type II membrane protein span at residues 8-28 (VAWLPLTLGTAMGFLITFYLA). The Lumenal segment spans residues 29 to 360 (RTLLERNSQP…SDFLEPPMES (332 aa)). An intrachain disulfide couples cysteine 79 to cysteine 103. UDP contacts are provided by methionine 82, glutamate 126, glycine 127, arginine 128, and lysine 134. Residue asparagine 148 is glycosylated (N-linked (GlcNAc...) asparagine). Residue aspartate 157 participates in UDP binding. Aspartate 157 and aspartate 159 together coordinate Mn(2+). Asparagine 173 carries N-linked (GlcNAc...) asparagine glycosylation. A disulfide bridge links cysteine 220 with cysteine 234. Residue tryptophan 274 participates in a glycoprotein binding. The cysteines at positions 289 and 290 are disulfide-linked. Residues histidine 298 and tyrosine 299 each contribute to the UDP site. Position 298 (histidine 298) interacts with Mn(2+). Residues asparagine 341 and asparagine 347 are each glycosylated (N-linked (GlcNAc...) asparagine).

It belongs to the glycosyltransferase 31 family. Beta3-Gal-T subfamily. Homodimer; disulfide-linked. Mn(2+) is required as a cofactor.

It is found in the membrane. The catalysed reaction is an N-acetyl-alpha-D-galactosaminyl derivative + UDP-alpha-D-galactose = a beta-D-galactosyl-(1-&gt;3)-N-acetyl-alpha-D-galactosaminyl derivative + UDP + H(+). It participates in protein modification; protein glycosylation. In terms of biological role, glycosyltransferase that generates the core 1 O-glycan Gal-beta1-3GalNAc-alpha1-Ser/Thr (T antigen), which is a precursor for many extended O-glycans in glycoproteins. This is Glycoprotein-N-acetylgalactosamine 3-beta-galactosyltransferase 1 (c1galt1) from Xenopus laevis (African clawed frog).